A 335-amino-acid chain; its full sequence is Putative SWIB domain-containing protein R508 (335 aa).

The segment covering 1-12 has biased composition (basic residues); sequence MSKRVTSSKKSK. The segment at 1–182 is disordered; sequence MSKRVTSSKK…NKKSPKKLLN (182 aa). Low complexity predominate over residues 24-33; it reads KNLSKTSKSV. The span at 60–75 shows a compositional bias: polar residues; sequence NIGGSKSSRTYNSEGS. The span at 83–109 shows a compositional bias: basic and acidic residues; that stretch reads SSKDSKVIKKNKQKVESSDSEKHSENK. A compositionally biased stretch (basic residues) spans 110–126; the sequence is SHKKSSKSSSISRKKPI. Residues 163-173 show a composition bias toward basic and acidic residues; the sequence is KGEDNNDEKQN. Residues 181–217 are a coiled coil; that stretch reads LNEKKISSESFDDKLNELREELRENYIRQKKIMNDIK. Positions 244 to 326 constitute an SWIB/MDM2 domain; sequence GFNKPQTVPQ…QTWLKKVYNE (83 aa).

This is Putative SWIB domain-containing protein R508 from Acanthamoeba polyphaga mimivirus (APMV).